The primary structure comprises 123 residues: uncharacterized protein (123 aa).

A helical transmembrane segment spans residues 5–25; it reads GTLVIIFAIVLILCIMLLFFY. The disordered stretch occupies residues 33–54; it reads PGVLPPPIPPPTPPPPKKKYDH. Pro residues predominate over residues 35–47; that stretch reads VLPPPIPPPTPPP.

This sequence belongs to the asfivirus CP123L family.

It localises to the host membrane. It is found in the virion. This is an uncharacterized protein from African swine fever virus (isolate Warthog/Namibia/Wart80/1980) (ASFV).